A 283-amino-acid chain; its full sequence is MQVVHTVADLRAALSEADRSAFVPTMGNLHAGHVSLVELAKRHGGPVVASIFVNPLQFGAGEDFERYPRTLAADCDKLAEAGCDLVFAPDTSALYPVAQTFRVDVPAALAEDLCGAFRPGHFAGVATVVLKLFNLVRPQVAVFGRKDYQQLLVVREMVRQFNLPIDIVAGATLRDPDGLAMSSRNGYLSAAERAQAPQLQRELAAIVAAIDGGARNFAALAAAARQRLTGAGWRVDYVEIRDAESLKTATQETEALVVLAAAWLGQTRLIDNLEVTSAAGIAA.

26 to 33 lines the ATP pocket; that stretch reads MGNLHAGH. Residue His-33 is the Proton donor of the active site. Gln-57 provides a ligand contact to (R)-pantoate. A beta-alanine-binding site is contributed by Gln-57. 144–147 is a binding site for ATP; the sequence is GRKD. (R)-pantoate is bound at residue Gln-150. ATP is bound by residues Leu-173 and 181 to 184; that span reads MSSR.

This sequence belongs to the pantothenate synthetase family. Homodimer.

It is found in the cytoplasm. The catalysed reaction is (R)-pantoate + beta-alanine + ATP = (R)-pantothenate + AMP + diphosphate + H(+). Its pathway is cofactor biosynthesis; (R)-pantothenate biosynthesis; (R)-pantothenate from (R)-pantoate and beta-alanine: step 1/1. Its function is as follows. Catalyzes the condensation of pantoate with beta-alanine in an ATP-dependent reaction via a pantoyl-adenylate intermediate. This chain is Pantothenate synthetase, found in Thiobacillus denitrificans (strain ATCC 25259 / T1).